Consider the following 402-residue polypeptide: Elongation factor Tu (402 aa).

Residues 10–212 (KPHVNIGTIG…AVDEYIPTPE (203 aa)) enclose the tr-type G domain. The tract at residues 19–26 (GHVDHGKT) is G1. GTP is bound at residue 19–26 (GHVDHGKT). Thr26 contributes to the Mg(2+) binding site. The segment at 60 to 64 (GITIA) is G2. The segment at 81–84 (DCPG) is G3. GTP contacts are provided by residues 81–85 (DCPGH) and 136–139 (NKED). The interval 136–139 (NKED) is G4. The segment at 177–179 (SAF) is G5.

This sequence belongs to the TRAFAC class translation factor GTPase superfamily. Classic translation factor GTPase family. EF-Tu/EF-1A subfamily. Monomer.

It localises to the cytoplasm. It carries out the reaction GTP + H2O = GDP + phosphate + H(+). GTP hydrolase that promotes the GTP-dependent binding of aminoacyl-tRNA to the A-site of ribosomes during protein biosynthesis. The protein is Elongation factor Tu of Aliarcobacter butzleri (strain RM4018) (Arcobacter butzleri).